The sequence spans 543 residues: CTP synthase (543 aa).

The segment at 1-265 is amidoligase domain; the sequence is MTRFIFVTGG…DQIVLDKFGL (265 aa). Position 13 (Ser13) interacts with CTP. Ser13 lines the UTP pocket. ATP contacts are provided by residues 14–19 and Asp71; that span reads SLGKGI. Residues Asp71 and Glu139 each coordinate Mg(2+). CTP contacts are provided by residues 146–148, 186–191, and Lys222; these read DIE and KTKPTQ. Residues 186–191 and Lys222 contribute to the UTP site; that span reads KTKPTQ. A Glutamine amidotransferase type-1 domain is found at 290-541; the sequence is TIAMVGKYMD…IQAAVEQNER (252 aa). Position 351 (Gly351) interacts with L-glutamine. The Nucleophile; for glutamine hydrolysis role is filled by Cys378. L-glutamine contacts are provided by residues 379 to 382, Glu402, and Arg469; that span reads LGMQ. Catalysis depends on residues His514 and Glu516.

The protein belongs to the CTP synthase family. As to quaternary structure, homotetramer.

It catalyses the reaction UTP + L-glutamine + ATP + H2O = CTP + L-glutamate + ADP + phosphate + 2 H(+). The catalysed reaction is L-glutamine + H2O = L-glutamate + NH4(+). The enzyme catalyses UTP + NH4(+) + ATP = CTP + ADP + phosphate + 2 H(+). It functions in the pathway pyrimidine metabolism; CTP biosynthesis via de novo pathway; CTP from UDP: step 2/2. With respect to regulation, allosterically activated by GTP, when glutamine is the substrate; GTP has no effect on the reaction when ammonia is the substrate. The allosteric effector GTP functions by stabilizing the protein conformation that binds the tetrahedral intermediate(s) formed during glutamine hydrolysis. Inhibited by the product CTP, via allosteric rather than competitive inhibition. Its function is as follows. Catalyzes the ATP-dependent amination of UTP to CTP with either L-glutamine or ammonia as the source of nitrogen. Regulates intracellular CTP levels through interactions with the four ribonucleotide triphosphates. This chain is CTP synthase, found in Saccharophagus degradans (strain 2-40 / ATCC 43961 / DSM 17024).